Consider the following 744-residue polypeptide: Phosphoribosylformylglycinamidine synthase subunit PurL (744 aa).

H45 is an active-site residue. Positions 48 and 87 each coordinate ATP. Residue E89 coordinates Mg(2+). Residues 90–93 and R112 each bind substrate; that span reads SHNH. H91 acts as the Proton acceptor in catalysis. Residue D113 coordinates Mg(2+). Residue Q236 participates in substrate binding. D264 serves as a coordination point for Mg(2+). 308–310 provides a ligand contact to substrate; the sequence is ESQ. The ATP site is built by N492 and G529. Residue N530 participates in Mg(2+) binding. Residue S532 coordinates substrate.

Belongs to the FGAMS family. Monomer. Part of the FGAM synthase complex composed of 1 PurL, 1 PurQ and 2 PurS subunits.

The protein resides in the cytoplasm. It carries out the reaction N(2)-formyl-N(1)-(5-phospho-beta-D-ribosyl)glycinamide + L-glutamine + ATP + H2O = 2-formamido-N(1)-(5-O-phospho-beta-D-ribosyl)acetamidine + L-glutamate + ADP + phosphate + H(+). It functions in the pathway purine metabolism; IMP biosynthesis via de novo pathway; 5-amino-1-(5-phospho-D-ribosyl)imidazole from N(2)-formyl-N(1)-(5-phospho-D-ribosyl)glycinamide: step 1/2. In terms of biological role, part of the phosphoribosylformylglycinamidine synthase complex involved in the purines biosynthetic pathway. Catalyzes the ATP-dependent conversion of formylglycinamide ribonucleotide (FGAR) and glutamine to yield formylglycinamidine ribonucleotide (FGAM) and glutamate. The FGAM synthase complex is composed of three subunits. PurQ produces an ammonia molecule by converting glutamine to glutamate. PurL transfers the ammonia molecule to FGAR to form FGAM in an ATP-dependent manner. PurS interacts with PurQ and PurL and is thought to assist in the transfer of the ammonia molecule from PurQ to PurL. This chain is Phosphoribosylformylglycinamidine synthase subunit PurL, found in Erythrobacter litoralis (strain HTCC2594).